A 264-amino-acid polypeptide reads, in one-letter code: Phosphoribosylaminoimidazole-succinocarboxamide synthase 1 (264 aa).

Belongs to the SAICAR synthetase family.

The enzyme catalyses 5-amino-1-(5-phospho-D-ribosyl)imidazole-4-carboxylate + L-aspartate + ATP = (2S)-2-[5-amino-1-(5-phospho-beta-D-ribosyl)imidazole-4-carboxamido]succinate + ADP + phosphate + 2 H(+). Its pathway is purine metabolism; IMP biosynthesis via de novo pathway; 5-amino-1-(5-phospho-D-ribosyl)imidazole-4-carboxamide from 5-amino-1-(5-phospho-D-ribosyl)imidazole-4-carboxylate: step 1/2. The protein is Phosphoribosylaminoimidazole-succinocarboxamide synthase 1 (purC1) of Mesorhizobium japonicum (strain LMG 29417 / CECT 9101 / MAFF 303099) (Mesorhizobium loti (strain MAFF 303099)).